The sequence spans 186 residues: Dihydrofolate reductase (186 aa).

The DHFR domain occupies 3 to 184; it reads PLNCIVAVSQ…IKYKFEVYEK (182 aa). Residues Ala9 and 15 to 21 each bind NADP(+); that span reads GIGKNGD. 30 to 35 lines the substrate pocket; sequence EYKYFQ. Lys32 carries the post-translational modification N6-acetyllysine; alternate. Lys32 is subject to N6-succinyllysine; alternate. 54–56 is an NADP(+) binding site; that stretch reads RKT. Arg70 serves as a coordination point for substrate. NADP(+)-binding positions include 76 to 78 and 116 to 123; these read SRE and GGSSVYKE. The residue at position 162 (Cys162) is a Cysteine derivative; partial.

Belongs to the dihydrofolate reductase family. Homodimer.

It is found in the mitochondrion. The protein resides in the cytoplasm. The enzyme catalyses (6S)-5,6,7,8-tetrahydrofolate + NADP(+) = 7,8-dihydrofolate + NADPH + H(+). It participates in cofactor biosynthesis; tetrahydrofolate biosynthesis; 5,6,7,8-tetrahydrofolate from 7,8-dihydrofolate: step 1/1. Its function is as follows. Key enzyme in folate metabolism. Contributes to the de novo mitochondrial thymidylate biosynthesis pathway. Catalyzes an essential reaction for de novo glycine and purine synthesis, and for DNA precursor synthesis. Binds its own mRNA and that of DHFR2. The protein is Dihydrofolate reductase (DHFR) of Sus scrofa (Pig).